A 362-amino-acid chain; its full sequence is Bifunctional nitrilase/nitrile hydratase NIT4 (362 aa).

In terms of domain architecture, CN hydrolase spans 31 to 307 (VRATVVQAST…EALITADLDL (277 aa)). Glu-71 (proton acceptor) is an active-site residue. The active-site Proton donor is the Lys-162. Cys-196 acts as the Nucleophile in catalysis.

The protein belongs to the carbon-nitrogen hydrolase superfamily. Nitrilase family.

The enzyme catalyses a nitrile + 2 H2O = a carboxylate + NH4(+). It carries out the reaction 3-cyano-L-alanine + 2 H2O = L-aspartate + NH4(+). Its function is as follows. Highly specific for beta-cyano-L-alanine (Ala(CN)). Low activity with 3-phenylpropionitrile (PPN). Not associated with auxin production but may be involved in cyanide detoxification. In Oryza sativa subsp. japonica (Rice), this protein is Bifunctional nitrilase/nitrile hydratase NIT4 (NIT4).